The primary structure comprises 320 residues: ADP-L-glycero-D-manno-heptose-6-epimerase (320 aa).

Residues 10-11 (FI), 31-32 (DN), Lys38, Lys53, 75-79 (LGACS), and Asn92 each bind NADP(+). Tyr139 functions as the Proton acceptor in the catalytic mechanism. Position 143 (Lys143) interacts with NADP(+). Substrate is bound at residue Asn168. 2 residues coordinate NADP(+): Val169 and Lys177. Residue Lys177 is the Proton acceptor of the active site. Substrate contacts are provided by residues Gly179, His186, 200–203 (FEGS), Arg213, and Tyr277.

Belongs to the NAD(P)-dependent epimerase/dehydratase family. HldD subfamily. As to quaternary structure, homopentamer. NADP(+) is required as a cofactor.

It catalyses the reaction ADP-D-glycero-beta-D-manno-heptose = ADP-L-glycero-beta-D-manno-heptose. It functions in the pathway nucleotide-sugar biosynthesis; ADP-L-glycero-beta-D-manno-heptose biosynthesis; ADP-L-glycero-beta-D-manno-heptose from D-glycero-beta-D-manno-heptose 7-phosphate: step 4/4. Catalyzes the interconversion between ADP-D-glycero-beta-D-manno-heptose and ADP-L-glycero-beta-D-manno-heptose via an epimerization at carbon 6 of the heptose. The sequence is that of ADP-L-glycero-D-manno-heptose-6-epimerase from Alkalilimnicola ehrlichii (strain ATCC BAA-1101 / DSM 17681 / MLHE-1).